A 171-amino-acid polypeptide reads, in one-letter code: Large ribosomal subunit protein uL10 (171 aa).

Belongs to the universal ribosomal protein uL10 family. Part of the ribosomal stalk of the 50S ribosomal subunit. The N-terminus interacts with L11 and the large rRNA to form the base of the stalk. The C-terminus forms an elongated spine to which L12 dimers bind in a sequential fashion forming a multimeric L10(L12)X complex.

Its function is as follows. Forms part of the ribosomal stalk, playing a central role in the interaction of the ribosome with GTP-bound translation factors. This is Large ribosomal subunit protein uL10 from Nitrosomonas eutropha (strain DSM 101675 / C91 / Nm57).